The primary structure comprises 141 residues: Protein NrdI (141 aa).

It belongs to the NrdI family.

In terms of biological role, probably involved in ribonucleotide reductase function. This is Protein NrdI from Bifidobacterium animalis subsp. lactis (strain AD011).